Consider the following 106-residue polypeptide: Large ribosomal subunit protein bL21 (106 aa).

The protein belongs to the bacterial ribosomal protein bL21 family. In terms of assembly, part of the 50S ribosomal subunit. Contacts protein L20.

Its function is as follows. This protein binds to 23S rRNA in the presence of protein L20. The chain is Large ribosomal subunit protein bL21 from Xylella fastidiosa (strain Temecula1 / ATCC 700964).